The sequence spans 23 residues: Melittin-related peptide AK-23-1 (23 aa).

K23 carries the lysine amide modification.

Expressed by the skin glands.

Its subcellular location is the secreted. This chain is Melittin-related peptide AK-23-1, found in Rana arvalis (Moor frog).